Consider the following 210-residue polypeptide: Isochorismatase domain-containing protein 2 (210 aa).

Ser7 bears the Phosphoserine mark.

It belongs to the isochorismatase family. In terms of assembly, interacts with CDKN2A.

It is found in the cytoplasm. It localises to the nucleus. This Rattus norvegicus (Rat) protein is Isochorismatase domain-containing protein 2 (Isoc2).